Here is a 122-residue protein sequence, read N- to C-terminus: Glycine cleavage system H protein (122 aa).

One can recognise a Lipoyl-binding domain in the interval 19 to 101; it reads VVTVGITNYA…EKEGWLWKMT (83 aa). K60 is modified (N6-lipoyllysine).

This sequence belongs to the GcvH family. In terms of assembly, the glycine cleavage system is composed of four proteins: P, T, L and H. (R)-lipoate serves as cofactor.

In terms of biological role, the glycine cleavage system catalyzes the degradation of glycine. The H protein shuttles the methylamine group of glycine from the P protein to the T protein. The protein is Glycine cleavage system H protein of Bartonella quintana (strain Toulouse) (Rochalimaea quintana).